Here is an 811-residue protein sequence, read N- to C-terminus: Capsid protein VP1 (811 aa).

Residues 321–367 (DSPMQEATKRKADSPAVETPAKKGTTGVNVNSQSTDPQNPSSSGATT) form a disordered region. Positions 346–366 (TGVNVNSQSTDPQNPSSSGAT) are enriched in polar residues.

Its subcellular location is the virion. Capsid protein self-assembles to form an icosahedral capsid with a T=1 symmetry, about 22 nm in diameter, and consisting of 60 copies of size variants of the capsid proteins, which differ in the N-terminushe capsid encapsulates the genomic ssDNA. Capsid proteins are responsible for the attachment to host cell receptors. This attachment induces virion internalization predominantly through clathrin-dependent endocytosis. In Galleria mellonella densovirus (GmDNV), this protein is Capsid protein VP1 (VP).